We begin with the raw amino-acid sequence, 178 residues long: Interleukin-1 receptor antagonist protein (178 aa).

Positions 1–26 are cleaved as a signal peptide; sequence MEICWGPYSHLISLLLILLFHSEAAC. A disulfide bridge connects residues cysteine 92 and cysteine 142. A glycan (N-linked (GlcNAc...) asparagine) is linked at asparagine 110.

It belongs to the IL-1 family.

Its subcellular location is the secreted. The protein resides in the cytoplasm. Anti-inflammatory antagonist of interleukin-1 family of proinflammatory cytokines such as interleukin-1beta/IL1B and interleukin-1alpha/IL1A. Protects from immune dysregulation and uncontrolled systemic inflammation triggered by IL1 for a range of innate stimulatory agents such as pathogens. The protein is Interleukin-1 receptor antagonist protein (Il1rn) of Mus musculus (Mouse).